The following is a 254-amino-acid chain: Glutamate racemase (254 aa).

Residues 10–11 and 42–43 each bind substrate; these read DS and YG. The Proton donor/acceptor role is filled by C73. A substrate-binding site is contributed by 74–75; that stretch reads NT. C183 acts as the Proton donor/acceptor in catalysis. 184 to 185 contributes to the substrate binding site; it reads TH.

This sequence belongs to the aspartate/glutamate racemases family.

The enzyme catalyses L-glutamate = D-glutamate. It participates in cell wall biogenesis; peptidoglycan biosynthesis. Functionally, provides the (R)-glutamate required for cell wall biosynthesis. The polypeptide is Glutamate racemase (Herpetosiphon aurantiacus (strain ATCC 23779 / DSM 785 / 114-95)).